Reading from the N-terminus, the 101-residue chain is Small ribosomal subunit protein uS14 (101 aa).

The protein belongs to the universal ribosomal protein uS14 family. As to quaternary structure, part of the 30S ribosomal subunit. Contacts proteins S3 and S10.

Functionally, binds 16S rRNA, required for the assembly of 30S particles and may also be responsible for determining the conformation of the 16S rRNA at the A site. The protein is Small ribosomal subunit protein uS14 of Pelagibacter ubique (strain HTCC1062).